A 468-amino-acid chain; its full sequence is MAAAHKVFELSHVFKDVSKIGDDESVCSPNEDYFGVPWKIVLRHKDEKMGVFLSCEKPSNNDAHCIVNVVYSVKLMSSSGVCYIKSDSKLFGEITEHGWVNFVNWNTMVDAFLIDDSIIIEVLVKTIFMSGLPKKSPKNFDESNKEFSDGIVVVKHQNFHILKKFLAFHCEYLEKLFFGDFKEAGKAEVTLKAISSTDFHYLLAVLYEDYAIDDDNVGGILRLASYLQVPIVIRKCEQFLIEGSGKPMEIRLDIAEKECLQNLKKHCLSKVGTADQIEAARAILPSDIPKRALKKFDESNKEFSDVIFVVEHNKFYVLKQILASHSSHFKKIFVENVDKREFTLADIDSNDFQNLVEVMYGVSFIDDLTVEGVLHLAHMYDRPFPMQKCVEFLIDLSEKSPKEKLKIAKAYQLKNLEKAALARINLPESIRAALSCDMAQMEVEVLKALMQKALFHLSDTKVHTETFF.

Residues 7–124 (VFELSHVFKD…DDSIIIEVLV (118 aa)) enclose the MATH domain. 2 consecutive BTB domains span residues 148–215 (SDGI…IDDD) and 304–368 (SDVI…IDDL).

In Caenorhabditis elegans, this protein is BTB and MATH domain-containing protein 45 (bath-45).